A 121-amino-acid chain; its full sequence is Large ribosomal subunit protein uL14 (121 aa).

This sequence belongs to the universal ribosomal protein uL14 family. As to quaternary structure, part of the 50S ribosomal subunit. Forms a cluster with proteins L3 and L19. In the 70S ribosome, L14 and L19 interact and together make contacts with the 16S rRNA in bridges B5 and B8.

Functionally, binds to 23S rRNA. Forms part of two intersubunit bridges in the 70S ribosome. In Legionella pneumophila (strain Corby), this protein is Large ribosomal subunit protein uL14.